The following is a 98-amino-acid chain: NADH-ubiquinone oxidoreductase chain 4L (98 aa).

3 helical membrane-spanning segments follow: residues 1 to 21 (MSLVHMNIGLAFTVAFLGLLM), 29 to 49 (SLLCLEGMMLTLFIMSSIMVL), and 61 to 81 (IILLVFAACEAAVGLSLLVMV).

It belongs to the complex I subunit 4L family. In terms of assembly, core subunit of respiratory chain NADH dehydrogenase (Complex I) which is composed of 45 different subunits.

It is found in the mitochondrion inner membrane. It carries out the reaction a ubiquinone + NADH + 5 H(+)(in) = a ubiquinol + NAD(+) + 4 H(+)(out). Core subunit of the mitochondrial membrane respiratory chain NADH dehydrogenase (Complex I) which catalyzes electron transfer from NADH through the respiratory chain, using ubiquinone as an electron acceptor. Part of the enzyme membrane arm which is embedded in the lipid bilayer and involved in proton translocation. The protein is NADH-ubiquinone oxidoreductase chain 4L (MT-ND4L) of Pseudosoriculus fumidus (Taiwanese brown-toothed shrew).